The sequence spans 550 residues: 65-kDa microtubule-associated protein 5 (550 aa).

2 coiled-coil regions span residues 46-174 (NKKV…QKVN) and 288-310 (IREA…KELV). Residues 471–531 (QFREQKRLQG…PGRSVTSGGK (61 aa)) form a disordered region. Polar residues predominate over residues 502–511 (QSLNTDNVTK).

Belongs to the MAP65/ASE1 family. As to quaternary structure, forms a dimer. Binds to MT, mostly with coaligned MT, both between parallel or antiparallel, forming thick bundles. Bundles polymerized MT via the formation of 25-nm crossbridges with cortical MT.

It is found in the nucleus. It localises to the cytoplasm. The protein resides in the cytoskeleton. The protein localises to the spindle. Its subcellular location is the phragmoplast. It is found in the cell cortex. It localises to the cell junction. The protein resides in the plasmodesma. In terms of biological role, microtubule-associated protein that bundle and stabilize adjacent microtubules (MT) of the cell cortex. Confers MT resistance to the drug oryzalin. Promotes the formation of a planar network of antiparallel microtubules. This chain is 65-kDa microtubule-associated protein 5 (MAP65-5), found in Arabidopsis thaliana (Mouse-ear cress).